The sequence spans 659 residues: Pollen receptor-like kinase 6 (659 aa).

An N-terminal signal peptide occupies residues 1–26 (MAAAVLNPGFFLLILLLSFSISPSLQ). Over 27 to 266 (YVSESEPLVR…SVPETSNKAA (240 aa)) the chain is Extracellular. Cysteine 58 and cysteine 67 are disulfide-bonded. LRR repeat units lie at residues 95-118 (LPNL…FFKL), 120-142 (GLKS…FFKD), 143-167 (MSKL…ITQL), 168-190 (PQLE…EFGS), and 192-214 (KNLK…SIAD). N-linked (GlcNAc...) asparagine glycosylation is present at asparagine 128. N-linked (GlcNAc...) asparagine glycosylation is present at asparagine 179. An N-linked (GlcNAc...) asparagine glycan is attached at asparagine 221. The interval 226-242 (EYLCGPVVDVGCENIEL) is LURE peptides binding. Cysteine 229 and cysteine 237 form a disulfide bridge. The segment at 241 to 260 (ELNDPQEGQPPSKPSSSVPE) is disordered. The helical transmembrane segment at 267–287 (INAIMVSISLLLLFFIIVGVI) threads the bilayer. At 288 to 659 (KRRNKKKNPD…AVRRIEQVKT (372 aa)) the chain is on the cytoplasmic side. The interval 312 to 354 (VRISESSSTTAKRSTDSSRKRGGHSDDGSTKKGVSNIGKGGNG) is disordered. The span at 324-341 (RSTDSSRKRGGHSDDGST) shows a compositional bias: basic and acidic residues. Positions 384 to 659 (KAAAEVLGNG…AVRRIEQVKT (276 aa)) constitute a Protein kinase domain. Residues 390 to 398 (LGNGSLGSA) and lysine 412 contribute to the ATP site. Serine 464 bears the Phosphoserine mark. A phosphothreonine mark is found at threonine 484 and threonine 557. Residue serine 561 is modified to Phosphoserine.

The protein belongs to the protein kinase superfamily. Ser/Thr protein kinase family. Interacts with ROPGEF8, ROPGEF9, ROPGEF12, ROPGEF13, PRK3, LIP1 and LIP2. Binds to LURE peptides via its LRR repeats; interacts with LURE1.1, LURE1.2, LURE1.3 and LURE1.4. In terms of tissue distribution, expressed specifically in the pollen tube, predominantly at the tip.

The protein localises to the cell membrane. The protein resides in the cytoplasmic granule. Its function is as follows. Key receptor for sensing species-specific attractants in cooperation with other pollen receptor-like kinases. Essential for pollen tube reorientation toward attractant peptides. The chain is Pollen receptor-like kinase 6 from Arabidopsis thaliana (Mouse-ear cress).